The chain runs to 353 residues: Fe(3+) ions import ATP-binding protein FbpC (353 aa).

The ABC transporter domain maps to 9 to 239 (VTFENVTKKF…PASAFIADFM (231 aa)). An ATP-binding site is contributed by 41–48 (GPSGCGKT).

Belongs to the ABC transporter superfamily. Fe(3+) ion importer (TC 3.A.1.10) family. In terms of assembly, the complex is composed of two ATP-binding proteins (FbpC), two transmembrane proteins (FbpB) and a solute-binding protein (FbpA).

It localises to the cell inner membrane. The catalysed reaction is Fe(3+)(out) + ATP + H2O = Fe(3+)(in) + ADP + phosphate + H(+). Functionally, part of the ABC transporter complex FbpABC involved in Fe(3+) ions import. Responsible for energy coupling to the transport system. In Brucella abortus (strain 2308), this protein is Fe(3+) ions import ATP-binding protein FbpC.